Here is a 39-residue protein sequence, read N- to C-terminus: Cytochrome b6-f complex subunit 5 (39 aa).

Residues 5–25 (LLCGIVLGLVPITLLGLFVSA) traverse the membrane as a helical segment.

It belongs to the PetG family. The 4 large subunits of the cytochrome b6-f complex are cytochrome b6, subunit IV (17 kDa polypeptide, PetD), cytochrome f and the Rieske protein, while the 4 small subunits are PetG, PetL, PetM and PetN. The complex functions as a dimer.

Its subcellular location is the cellular thylakoid membrane. In terms of biological role, component of the cytochrome b6-f complex, which mediates electron transfer between photosystem II (PSII) and photosystem I (PSI), cyclic electron flow around PSI, and state transitions. PetG is required for either the stability or assembly of the cytochrome b6-f complex. This Prochlorococcus marinus (strain MIT 9301) protein is Cytochrome b6-f complex subunit 5.